A 193-amino-acid polypeptide reads, in one-letter code: C-type lectin domain family 3 member A homolog (193 aa).

A signal peptide spans 1–24 (MAQAGLLIWLFFTILLLDLTCTQS). 3 disulfide bridges follow: Cys66–Cys76, Cys93–Cys188, and Cys164–Cys180. In terms of domain architecture, C-type lectin spans 72–189 (IHKKCYLSFE…CRSLKKYICE (118 aa)).

Its subcellular location is the secreted. The polypeptide is C-type lectin domain family 3 member A homolog (clec3a) (Xenopus laevis (African clawed frog)).